The chain runs to 539 residues: Chloride channel CLIC-like protein 1 (539 aa).

The signal sequence occupies residues 1–18 (MLCRLLLCECLLLITGYA). Over 19–184 (HDDDWIDPTD…EDYFGVDPYN (166 aa)) the chain is Lumenal. A disordered region spans residues 41 to 61 (KSQVRSGTSEKKEVSPDSSEA). Residues 185–205 (VFMVLLCLLCLVVLVATELWT) form a helical membrane-spanning segment. Residues 206–215 (YVRWYTQMKR) lie on the Cytoplasmic side of the membrane. The chain crosses the membrane as a helical span at residues 216–236 (IFIISFLLSLAWNWIYLYKMA). At 237–329 (FAQHQANIAG…GEFIKALMKE (93 aa)) the chain is on the lumenal side. The helical transmembrane segment at 330–350 (IPVLLQIPVLAILALAVLSFC) threads the bilayer. Topologically, residues 351–539 (YGAGRSVPML…GTEPVSSPCG (189 aa)) are cytoplasmic. The disordered stretch occupies residues 361 to 410 (RHFGGPDREPPRALEPDDRRRQKGLDYRLHGGAGDADFSYRGPAGSIEQG). Basic and acidic residues predominate over residues 364-389 (GGPDREPPRALEPDDRRRQKGLDYRL). Residues S429, S433, and S459 each carry the phosphoserine modification. A disordered region spans residues 444 to 539 (DTEAQEHPEV…GTEPVSSPCG (96 aa)). Residues 475 to 485 (STPTEYSQSAK) are compositionally biased toward polar residues. At T476 the chain carries Phosphothreonine. S498, S513, and S521 each carry phosphoserine. A compositionally biased stretch (low complexity) spans 512–521 (CSPPGGCPPS).

Belongs to the chloride channel MCLC family. In terms of assembly, homomultimers. Interacts with mitochondrial protein PIGBOS1 (via C-terminus); the interaction occurs at the mitochondria-associated endoplasmic reticulum (ER) membrane, a zone of contact between the ER and mitochondrial membranes, but does not appear to play a role in ER-mitochondria tethering and is not affected by ER stress. Interacts with CALR. Expressed in cerebellum (at protein level).

It is found in the endoplasmic reticulum membrane. It carries out the reaction chloride(in) = chloride(out). The enzyme catalyses bromide(in) = bromide(out). The catalysed reaction is nitrate(in) = nitrate(out). It catalyses the reaction fluoride(in) = fluoride(out). Activated by membrane phosphatidylinositol 4,5-bisphosphate (PI(4,5)P2, PIP2). Inhibited by lumenal Ca(2+). Anion-selective channel with Ca(2+)-dependent and voltage-independent gating. Permeable to small monovalent anions with selectivity for bromide &gt; chloride &gt; nitrate &gt; fluoride. Operates in the endoplasmic reticulum (ER) membrane where it mediates chloride efflux to compensate for the loss of positive charges from the ER lumen upon Ca(2+) release. Contributes to the maintenance of ER Ca(2+) pools and activation of unfolded protein response to prevent accumulation of misfolded proteins in the ER lumen. Particularly involved in ER homeostasis mechanisms underlying motor neurons and retinal photoreceptors survival. This is Chloride channel CLIC-like protein 1 from Mus musculus (Mouse).